The chain runs to 310 residues: Probable mitochondrial import receptor subunit TOM40-2 (310 aa).

Met-1 bears the N-acetylmethionine mark.

The protein belongs to the Tom40 family. Forms part of the preprotein translocase complex of the outer mitochondrial membrane (TOM complex) which consists of at least 6 different proteins (TOM5, TOM6, TOM7, TOM20, TOM22/TOM9 and TOM40). Present in a large lipid-enriched complex called mitochondrial transmembrane lipoprotein (MTL) complex made of proteins located in the two mitochondrial membranes, including the TOM complex and the core components of the MICOS complex and containing at least digalactosyldiacylglycerol (DGDG). Binds to MIC60. Component of a mitochondrial large protein complex that contains, at least, MIC60, DGS1, TOM40, TOM20 proteins, and petC/RISP. Expressed in roots, flowers, young cotyledons and leaves.

The protein resides in the mitochondrion outer membrane. Central component of the receptor complex responsible for the recognition and translocation of cytosolically synthesized mitochondrial preproteins. Together with TOM22 functions as the transit peptide receptor at the surface of the mitochondrion outer membrane and facilitates the movement of preproteins into the translocation pore. Directly involved in the pore formation. The polypeptide is Probable mitochondrial import receptor subunit TOM40-2 (Arabidopsis thaliana (Mouse-ear cress)).